The chain runs to 341 residues: Long-chain acyl-[acyl-carrier-protein] reductase (341 aa).

This sequence belongs to the short-chain dehydrogenases/reductases (SDR) family. Requires a divalent metal cation as cofactor.

The enzyme catalyses a long-chain fatty aldehyde + holo-[ACP] + NADP(+) = a long-chain fatty acyl-[ACP] + NADPH + H(+). It carries out the reaction a long-chain fatty aldehyde + holo-[ACP] + NAD(+) = a long-chain fatty acyl-[ACP] + NADH + H(+). Catalyzes the NADP-dependent reduction of long-chain acyl-ACP to the corresponding fatty aldehyde. Involved in the biosynthesis of alkanes, mainly heptadecane and pentadecane, by producing the fatty aldehydes used by aldehyde decarbonylase. The protein is Long-chain acyl-[acyl-carrier-protein] reductase of Synechococcus elongatus (strain ATCC 33912 / PCC 7942 / FACHB-805) (Anacystis nidulans R2).